Consider the following 216-residue polypeptide: Probable GTP-binding protein EngB (216 aa).

Residues A24–E205 form the EngB-type G domain. Residues G32 to S39, G59 to A63, D86 to G89, T153 to D156, and F184 to A186 each bind GTP. Mg(2+) is bound by residues S39 and T61.

This sequence belongs to the TRAFAC class TrmE-Era-EngA-EngB-Septin-like GTPase superfamily. EngB GTPase family. Requires Mg(2+) as cofactor.

Functionally, necessary for normal cell division and for the maintenance of normal septation. The chain is Probable GTP-binding protein EngB from Anaeromyxobacter dehalogenans (strain 2CP-C).